Here is a 384-residue protein sequence, read N- to C-terminus: Probable 2-heptyl-3-hydroxy-4(1H)-quinolone synthase AqdB2 (384 aa).

The protein belongs to the 3-hydroxybenzoate 6-hydroxylase family.

It carries out the reaction 2-heptyl-4(1H)-quinolone + NADH + O2 + H(+) = 2-heptyl-3-hydroxy-4(1H)-quinolone + NAD(+) + H2O. In terms of biological role, involved in the degradation of the Pseudomonas aeruginosa quorum sensing signal molecule HHQ (2-heptyl-4-quinolone) to anthranilic acid. Probably catalyzes the hydroxylation of HHQ to PQS (2-heptyl-3-hydroxy-4-quinolone). The polypeptide is Probable 2-heptyl-3-hydroxy-4(1H)-quinolone synthase AqdB2 (Rhodococcus erythropolis (Arthrobacter picolinophilus)).